Consider the following 111-residue polypeptide: Disintegrin Eo1 subunit 1 (111 aa).

An N-terminal signal peptide occupies residues 1–20; that stretch reads MIQVLLVIICLAVFPYQGSS. Positions 21–46 are excised as a propeptide; that stretch reads IILESGNVNDFELVYPKKVTVLPTGA. Residues 26 to 111 enclose the Disintegrin domain; it reads GNVNDFELVY…SDCPRNPWKD (86 aa). 4 disulfide bridges follow: Cys-53–Cys-76, Cys-67–Cys-73, Cys-72–Cys-97, and Cys-85–Cys-104. A Cell attachment site; atypical (WGD) motif is present at residues 89 to 91; it reads WGD. Positions 110-111 are excised as a propeptide; the sequence is KD.

Belongs to the disintegrin family. Dimeric disintegrin subfamily. As to quaternary structure, heterodimer; disulfide-linked. Expressed by the venom gland.

The protein localises to the secreted. In terms of biological role, poor inhibitor of platelet aggregation. The disintegrin inhibits the adhesion of cells expressing the RGD-dependent integrin alpha-5/beta-1 (ITGA5/ITGB1) to immobilized fibronectin. Inhibition on alpha-IIb/beta-3 (ITGA2B/ITGB3) is low. This Echis ocellatus (Ocellated saw-scaled viper) protein is Disintegrin Eo1 subunit 1.